A 142-amino-acid chain; its full sequence is Large ribosomal subunit protein uL13 (142 aa).

It belongs to the universal ribosomal protein uL13 family. As to quaternary structure, part of the 50S ribosomal subunit.

Its function is as follows. This protein is one of the early assembly proteins of the 50S ribosomal subunit, although it is not seen to bind rRNA by itself. It is important during the early stages of 50S assembly. In Aeromonas salmonicida (strain A449), this protein is Large ribosomal subunit protein uL13.